A 212-amino-acid polypeptide reads, in one-letter code: Uracil-DNA glycosylase (212 aa).

D59 serves as the catalytic Proton acceptor.

This sequence belongs to the uracil-DNA glycosylase (UDG) superfamily. UNG family.

The protein localises to the cytoplasm. It catalyses the reaction Hydrolyzes single-stranded DNA or mismatched double-stranded DNA and polynucleotides, releasing free uracil.. Functionally, excises uracil residues from the DNA which can arise as a result of misincorporation of dUMP residues by DNA polymerase or due to deamination of cytosine. This Ureaplasma urealyticum serovar 10 (strain ATCC 33699 / Western) protein is Uracil-DNA glycosylase.